Here is a 475-residue protein sequence, read N- to C-terminus: ATP synthase subunit beta, chloroplastic (475 aa).

Residue 155 to 162 (GGAGVGKT) coordinates ATP.

It belongs to the ATPase alpha/beta chains family. As to quaternary structure, F-type ATPases have 2 components, CF(1) - the catalytic core - and CF(0) - the membrane proton channel. CF(1) has five subunits: alpha(3), beta(3), gamma(1), delta(1), epsilon(1). CF(0) has four main subunits: a(1), b(1), b'(1) and c(9-12).

It is found in the plastid. Its subcellular location is the chloroplast thylakoid membrane. It catalyses the reaction ATP + H2O + 4 H(+)(in) = ADP + phosphate + 5 H(+)(out). Its function is as follows. Produces ATP from ADP in the presence of a proton gradient across the membrane. The catalytic sites are hosted primarily by the beta subunits. In Guillardia theta (Cryptophyte), this protein is ATP synthase subunit beta, chloroplastic.